Reading from the N-terminus, the 344-residue chain is L-threonine 3-dehydrogenase (344 aa).

Cysteine 42 contacts Zn(2+). Catalysis depends on charge relay system residues threonine 44 and histidine 47. Residues histidine 67, glutamate 68, cysteine 97, cysteine 100, cysteine 103, and cysteine 111 each coordinate Zn(2+). Residues isoleucine 179, aspartate 199, arginine 204, 266 to 268 (LGI), and 290 to 291 (IY) each bind NAD(+).

It belongs to the zinc-containing alcohol dehydrogenase family. As to quaternary structure, homotetramer. Zn(2+) is required as a cofactor.

The protein localises to the cytoplasm. The enzyme catalyses L-threonine + NAD(+) = (2S)-2-amino-3-oxobutanoate + NADH + H(+). It functions in the pathway amino-acid degradation; L-threonine degradation via oxydo-reductase pathway; glycine from L-threonine: step 1/2. Catalyzes the NAD(+)-dependent oxidation of L-threonine to 2-amino-3-ketobutyrate. The chain is L-threonine 3-dehydrogenase from Sinorhizobium medicae (strain WSM419) (Ensifer medicae).